Reading from the N-terminus, the 363-residue chain is MKFFNREKEIEEILHIIESEPQRINFIFGSINSGKTALINEIINNRLNKDKYVVFYFDLREIFISKYDDFIEVLFEEYEEPFIDKVKRLFLSLIKDYPDVIKSYALLNITGVVDSIPIPKNTLNELLKKRNVKNVFRYITSVLIKIKREGKQPIIIIDELQKIGDLKLNGFLIYELFNYFVSLTKHKHLCHVFCLSSDSLFIERVYNEAMLEGRCKYILVDDFDRETALKFMDFLAKENNINLTNEDKELIYNYVGGKPIDIIYVINEMKYKKLEDILTSMLKEETQKLKYFLENVKEEDEELYKKVVDALKIFKDSYEIEDIKIPKKLREFLVKKNILFLNPIEGTLKPQSFLVWNAIKRIL.

29-36 is an ATP binding site; it reads GSINSGKT.

It belongs to the archaeal ATPase family.

This is an uncharacterized protein from Methanocaldococcus jannaschii (strain ATCC 43067 / DSM 2661 / JAL-1 / JCM 10045 / NBRC 100440) (Methanococcus jannaschii).